A 1157-amino-acid polypeptide reads, in one-letter code: Myosin tail region-interacting protein MTI1 (1157 aa).

The 65-residue stretch at 5–69 folds into the SH3 domain; sequence EVPFKVVAQF…PKSFVAVQGS (65 aa). 2 disordered regions span residues 68–116 and 135–156; these read GSEV…GPVP and TAVS…KVPM. The segment covering 77–89 has biased composition (polar residues); the sequence is SSPNTGSTEQRTI. Basic and acidic residues predominate over residues 93 to 110; sequence VEQKDLPEPISPETKKET. A Phosphoserine modification is found at Ser103. Residues 138 to 149 show a composition bias toward polar residues; it reads SAQVQHDSSSGN. Ser158 and Ser166 each carry phosphoserine. Disordered stretches follow at residues 231–256 and 284–888; these read PEPI…KDLP and KKAK…PKVA. Coiled coils occupy residues 234–301 and 356–430; these read INRA…NKNE and EKEQ…GASR. Basic and acidic residues-rich tracts occupy residues 242-256, 284-296, and 312-383; these read GRIE…KDLP, KKAK…ERSA, and NEKT…RGEN. The span at 398–411 shows a compositional bias: acidic residues; sequence EGDNDEEKEEEDSE. Composition is skewed to basic and acidic residues over residues 412–423 and 506–524; these read ENRRAALRERMA and KTLD…EHGT. Residues 544 to 558 show a composition bias toward acidic residues; the sequence is DSDEDTDDHEFEDAN. A Phosphoserine modification is found at Ser565. Over residues 574–585 the composition is skewed to low complexity; the sequence is GNNESENVNSGE. Residues 597-606 show a composition bias toward basic and acidic residues; that stretch reads RTAEVSHDIE. The span at 607 to 641 shows a compositional bias: polar residues; it reads NSSQNTTGNVLPVSSPQTRVARNGSINSLTKSISG. Residues Ser621, Ser631, and Ser634 each carry the phosphoserine modification. Thr636 bears the Phosphothreonine mark. 2 positions are modified to phosphoserine: Ser638 and Ser647. The segment covering 642–653 has biased composition (basic and acidic residues); the sequence is ENRRKSINEYHD. A compositionally biased stretch (polar residues) spans 654-668; it reads TVSTNSSALTETAQD. Composition is skewed to pro residues over residues 691 to 738 and 747 to 765; these read PHPV…PVSS and SIPP…PAPL. A compositionally biased stretch (basic and acidic residues) spans 769 to 778; the sequence is KHNEVEEHVK. The segment covering 795 to 808 has biased composition (pro residues); that stretch reads NTAPPLPRAPPVPP. The segment covering 832–853 has biased composition (polar residues); that stretch reads QNVTASTPSMMSTQQRVPTSVL. A Phosphothreonine modification is found at Thr850. The residue at position 889 (Ser889) is a Phosphoserine. Thr894 and Thr895 each carry phosphothreonine. Lys1012 is covalently cross-linked (Glycyl lysine isopeptide (Lys-Gly) (interchain with G-Cter in ubiquitin)).

Binds to the SH3 domains of the type I myosins MYO3 and MYO5.

The protein resides in the cytoplasm. The protein localises to the cytoskeleton. It localises to the actin patch. Involved in the regulation of actin cytoskeleton. The polypeptide is Myosin tail region-interacting protein MTI1 (BBC1) (Saccharomyces cerevisiae (strain ATCC 204508 / S288c) (Baker's yeast)).